The chain runs to 615 residues: Dihydroxy-acid dehydratase (615 aa).

Asp-81 is a binding site for Mg(2+). Cys-122 contributes to the [2Fe-2S] cluster binding site. 2 residues coordinate Mg(2+): Asp-123 and Lys-124. Lys-124 carries the N6-carboxylysine modification. Cys-193 contributes to the [2Fe-2S] cluster binding site. Glu-489 contacts Mg(2+). The active-site Proton acceptor is Ser-515.

Belongs to the IlvD/Edd family. As to quaternary structure, homodimer. It depends on [2Fe-2S] cluster as a cofactor. Requires Mg(2+) as cofactor.

It carries out the reaction (2R)-2,3-dihydroxy-3-methylbutanoate = 3-methyl-2-oxobutanoate + H2O. The catalysed reaction is (2R,3R)-2,3-dihydroxy-3-methylpentanoate = (S)-3-methyl-2-oxopentanoate + H2O. It participates in amino-acid biosynthesis; L-isoleucine biosynthesis; L-isoleucine from 2-oxobutanoate: step 3/4. It functions in the pathway amino-acid biosynthesis; L-valine biosynthesis; L-valine from pyruvate: step 3/4. Its function is as follows. Functions in the biosynthesis of branched-chain amino acids. Catalyzes the dehydration of (2R,3R)-2,3-dihydroxy-3-methylpentanoate (2,3-dihydroxy-3-methylvalerate) into 2-oxo-3-methylpentanoate (2-oxo-3-methylvalerate) and of (2R)-2,3-dihydroxy-3-methylbutanoate (2,3-dihydroxyisovalerate) into 2-oxo-3-methylbutanoate (2-oxoisovalerate), the penultimate precursor to L-isoleucine and L-valine, respectively. This chain is Dihydroxy-acid dehydratase, found in Pseudomonas syringae pv. syringae (strain B728a).